Reading from the N-terminus, the 301-residue chain is D-alanine--D-alanine ligase (301 aa).

The ATP-grasp domain occupies 102–295; sequence KAVFAAAGLP…FPALCAWMVE (194 aa). Residue 128 to 181 participates in ATP binding; sequence PLPRPYVIKPVNEGSSVGVFILREGDNRRADIARAWRHGSVAMTEEYVPGRELT. Mg(2+)-binding residues include D248, E262, and N264.

This sequence belongs to the D-alanine--D-alanine ligase family. Requires Mg(2+) as cofactor. Mn(2+) is required as a cofactor.

It is found in the cytoplasm. The enzyme catalyses 2 D-alanine + ATP = D-alanyl-D-alanine + ADP + phosphate + H(+). It functions in the pathway cell wall biogenesis; peptidoglycan biosynthesis. In terms of biological role, cell wall formation. In Acidiphilium cryptum (strain JF-5), this protein is D-alanine--D-alanine ligase.